Reading from the N-terminus, the 279-residue chain is Large ribosomal subunit protein uL2 (279 aa).

2 disordered regions span residues 32–58 (SLLTPLPKKGGRNAHGRITARHQGGGH) and 223–279 (GVAM…RKRG). Composition is skewed to basic residues over residues 40-58 (KGGRNAHGRITARHQGGGH) and 269-279 (VRRRYATRKRG).

This sequence belongs to the universal ribosomal protein uL2 family. In terms of assembly, part of the 50S ribosomal subunit. Forms a bridge to the 30S subunit in the 70S ribosome.

Functionally, one of the primary rRNA binding proteins. Required for association of the 30S and 50S subunits to form the 70S ribosome, for tRNA binding and peptide bond formation. It has been suggested to have peptidyltransferase activity; this is somewhat controversial. Makes several contacts with the 16S rRNA in the 70S ribosome. The chain is Large ribosomal subunit protein uL2 from Salinispora tropica (strain ATCC BAA-916 / DSM 44818 / JCM 13857 / NBRC 105044 / CNB-440).